Consider the following 489-residue polypeptide: Cobyric acid synthase (489 aa).

The 189-residue stretch at 254–442 (ARVIAVPVLP…VHGLFADDRQ (189 aa)) folds into the GATase cobBQ-type domain. Catalysis depends on cysteine 336, which acts as the Nucleophile. Histidine 434 is an active-site residue.

This sequence belongs to the CobB/CobQ family. CobQ subfamily.

Its pathway is cofactor biosynthesis; adenosylcobalamin biosynthesis. Its function is as follows. Catalyzes amidations at positions B, D, E, and G on adenosylcobyrinic A,C-diamide. NH(2) groups are provided by glutamine, and one molecule of ATP is hydrogenolyzed for each amidation. The chain is Cobyric acid synthase from Methylobacterium nodulans (strain LMG 21967 / CNCM I-2342 / ORS 2060).